The primary structure comprises 156 residues: Ribosomal RNA large subunit methyltransferase H (156 aa).

S-adenosyl-L-methionine-binding positions include leucine 73, glycine 104, and 123–128; that span reads LSPLTL.

The protein belongs to the RNA methyltransferase RlmH family. As to quaternary structure, homodimer.

Its subcellular location is the cytoplasm. The catalysed reaction is pseudouridine(1915) in 23S rRNA + S-adenosyl-L-methionine = N(3)-methylpseudouridine(1915) in 23S rRNA + S-adenosyl-L-homocysteine + H(+). Specifically methylates the pseudouridine at position 1915 (m3Psi1915) in 23S rRNA. The protein is Ribosomal RNA large subunit methyltransferase H of Serratia proteamaculans (strain 568).